Reading from the N-terminus, the 439-residue chain is Homeobox protein ceh-32 (439 aa).

Positions tryptophan 183–alanine 243 form a DNA-binding region, homeobox. 3 disordered regions span residues glycine 253 to proline 293, glutamate 344 to serine 365, and valine 379 to glutamate 439. 2 stretches are compositionally biased toward acidic residues: residues serine 264 to methionine 274 and glutamate 344 to isoleucine 358. Polar residues predominate over residues valine 379–leucine 392. Over residues valine 398–histidine 428 the composition is skewed to basic and acidic residues.

The protein belongs to the SIX/Sine oculis homeobox family. As to quaternary structure, interacts with gmn-1. As to expression, expressed in the posterior gonad. Expressed in some cells in the head that are probably neurons. Expressed in the dorsal and ventral neuron RMD pair and the inner labial neuron class IL1. Not expressed in BAG neurons.

It localises to the nucleus. Functionally, transcription factor which binds a motif with the core sequence 5'-GTATCA-3'. Plays a role in head morphogenesis. Involved in embryonic development. Required for cell specification of the RIA interneurons. May cooperate with the transcription factor vab-3 and phosphatase eya-1 to repress transcription factor ets-5 expression in non BAG neuronal cells. This chain is Homeobox protein ceh-32, found in Caenorhabditis elegans.